The primary structure comprises 337 residues: 5-formaminoimidazole-4-carboxamide-1-(beta)-D-ribofuranosyl 5'-monophosphate synthetase (337 aa).

Residues His-23 and Ser-87 each coordinate 5-amino-1-(5-phospho-beta-D-ribosyl)imidazole-4-carboxamide. In terms of domain architecture, ATP-grasp spans 121-328 (MRLLEYAGIP…IAHEIVNAVK (208 aa)). ATP-binding positions include 144–191 (PVIV…VPAY) and Glu-213. Asn-233 is a binding site for 5-amino-1-(5-phospho-beta-D-ribosyl)imidazole-4-carboxamide. Positions 272 and 285 each coordinate Mg(2+).

The protein belongs to the phosphohexose mutase family. The cofactor is Mg(2+). It depends on Mn(2+) as a cofactor.

It catalyses the reaction 5-amino-1-(5-phospho-beta-D-ribosyl)imidazole-4-carboxamide + formate + ATP = 5-formamido-1-(5-phospho-D-ribosyl)imidazole-4-carboxamide + ADP + phosphate. It functions in the pathway purine metabolism; IMP biosynthesis via de novo pathway; 5-formamido-1-(5-phospho-D-ribosyl)imidazole-4-carboxamide from 5-amino-1-(5-phospho-D-ribosyl)imidazole-4-carboxamide (formate route): step 1/1. In terms of biological role, catalyzes the ATP- and formate-dependent formylation of 5-aminoimidazole-4-carboxamide-1-beta-d-ribofuranosyl 5'-monophosphate (AICAR) to 5-formaminoimidazole-4-carboxamide-1-beta-d-ribofuranosyl 5'-monophosphate (FAICAR) in the absence of folates. The chain is 5-formaminoimidazole-4-carboxamide-1-(beta)-D-ribofuranosyl 5'-monophosphate synthetase from Caldivirga maquilingensis (strain ATCC 700844 / DSM 13496 / JCM 10307 / IC-167).